A 112-amino-acid chain; its full sequence is uncharacterized protein (112 aa).

Its subcellular location is the plastid. It is found in the chloroplast. This is an uncharacterized protein from Chlamydomonas reinhardtii (Chlamydomonas smithii).